The primary structure comprises 82 residues: Turripeptide Gsp9.1 (82 aa).

The signal sequence occupies residues 1-23 (MMAKLMITVMMVLLLSLQQGADG). Positions 24–46 (RSKRWRKNQMAASSIMRNLITAR) are excised as a propeptide. 4-hydroxyproline is present on residues Pro-49 and Pro-50. Cystine bridges form between Cys-53–Cys-68, Cys-58–Cys-72, and Cys-64–Cys-79. Glu-60 and Glu-63 each carry 4-carboxyglutamate.

The protein belongs to the Pg turripeptide superfamily. Expressed by the venom duct.

Its subcellular location is the secreted. This chain is Turripeptide Gsp9.1, found in Gemmula speciosa (Splendid gem-turris).